The chain runs to 428 residues: Ribosome biogenesis protein WDR12 homolog (428 aa).

Residues 13-97 (LQVHFTTKQK…EDTIELEYVE (85 aa)) form a ubiquitin-like (UBL) domain region. WD repeat units lie at residues 109–146 (LHDD…KLTI), 148–190 (GHVA…NTAE), 197–236 (GHER…DKGE), 259–297 (GHRE…IKTE), 299–338 (TGNK…GNFV), 344–384 (GHSQ…APIF), and 388–426 (GHED…DNTK).

It belongs to the WD repeat WDR12/YTM1 family.

It localises to the nucleus. The protein resides in the nucleolus. Its subcellular location is the nucleoplasm. Required for maturation of ribosomal RNAs and formation of the large ribosomal subunit. The protein is Ribosome biogenesis protein WDR12 homolog of Anopheles gambiae (African malaria mosquito).